A 365-amino-acid chain; its full sequence is MKLLHFTILLQVSLFPASSLAQAGGNNTEVQVQQTLPGTGIAAVNSVNLLRIYSQDTSGGIREARFEGYWSGGLANDTIAKARANSSIAAASDDLELYKSSSSTNFLLKIRVYYLLPNNTLGEAASDSQSRWYTGSLNQYNFQVASHSRLAAVFVPSTQRPRLRIYAQLGDNTIQEFGYDVSPLSQLEPMFANYLKVGRGWQRLANFGPALPGTGIAALTYTTGLRRSTTRVYFQTTDRRVVERVYDNRSWSDGGTVVRTAKPRTPLAATSFLLTPGNPQSVRVYYGTEDNRILEKGTEGGTYWYDGAFEHSAIPDSQVAAVDWGNGGVFNIRLYIQDGAFKNGISEWAWFRRSWRRGILAIPPA.

The first 21 residues, 1–21 (MKLLHFTILLQVSLFPASSLA), serve as a signal peptide directing secretion. Repeat copies occupy residues 22-79 (QAGG…NDTI), 80-141 (AKAR…NQYN), 142-206 (FQVA…RLAN), 207-261 (FGPA…VRTA), 262-309 (KPRT…DGAF), and 310-365 (EHSA…IPPA). The 6 X approximate tandem repeats stretch occupies residues 22–365 (QAGGNNTEVQ…RRGILAIPPA (344 aa)). A glycan (N-linked (GlcNAc...) asparagine) is linked at asparagine 26. Beta-L-fucose contacts are provided by arginine 51, glutamate 63, and tryptophan 70. 2 N-linked (GlcNAc...) asparagine glycosylation sites follow: asparagine 76 and asparagine 85. Residue arginine 111 coordinates beta-L-fucose. N-linked (GlcNAc...) asparagine glycosylation occurs at asparagine 118. Beta-L-fucose-binding residues include glutamate 123, tryptophan 132, arginine 164, glutamate 176, tryptophan 201, and arginine 231. Residue asparagine 248 is glycosylated (N-linked (GlcNAc...) asparagine). Beta-L-fucose-binding residues include arginine 283, arginine 333, and glutamate 347.

This sequence belongs to the fungal fucose-specific lectin family. As to quaternary structure, homodimer.

It localises to the secreted. Probable L-fucose-binding lectin. This is Fucose-specific lectin from Arthroderma benhamiae (strain ATCC MYA-4681 / CBS 112371) (Trichophyton mentagrophytes).